A 171-amino-acid chain; its full sequence is Large ribosomal subunit protein bL17 (171 aa).

Residues 140–152 (KREIQTKAREEKR) show a composition bias toward basic and acidic residues. Residues 140-171 (KREIQTKAREEKRATRKSNSAPVSKETTSKKK) form a disordered region. Residues 156 to 165 (KSNSAPVSKE) show a composition bias toward polar residues.

This sequence belongs to the bacterial ribosomal protein bL17 family. Part of the 50S ribosomal subunit. Contacts protein L32.

This is Large ribosomal subunit protein bL17 from Leptospira interrogans serogroup Icterohaemorrhagiae serovar copenhageni (strain Fiocruz L1-130).